The chain runs to 342 residues: A-type ATP synthase subunit C (342 aa).

This sequence belongs to the V-ATPase V0D/AC39 subunit family. Has multiple subunits with at least A(3), B(3), C, D, E, F, H, I and proteolipid K(x).

It localises to the cell membrane. Functionally, component of the A-type ATP synthase that produces ATP from ADP in the presence of a proton gradient across the membrane. This is A-type ATP synthase subunit C from Archaeoglobus fulgidus (strain ATCC 49558 / DSM 4304 / JCM 9628 / NBRC 100126 / VC-16).